Consider the following 467-residue polypeptide: Iroquois-class homeodomain protein irx-1-A (467 aa).

The segment at residues 126 to 188 (DPGRPKNATR…NARRRLKKEN (63 aa)) is a DNA-binding region (homeobox; TALE-type). Disordered regions lie at residues 197–306 (KEDD…PPHS), 318–344 (TSPD…QHPA), and 410–467 (SLSS…LPSA). Acidic residues-rich tracts occupy residues 215–225 (EDDEEIDLESI) and 233–244 (NDGEQSNEEEDE). The segment covering 245–262 (KLEHLRQGEKESLKKESE) has biased composition (basic and acidic residues). Positions 415-431 (KTPERTSPKHSDRENVP) are enriched in basic and acidic residues. Over residues 447 to 460 (RENTLSQQEGTSRI) the composition is skewed to polar residues.

This sequence belongs to the TALE/IRO homeobox family. In terms of tissue distribution, expressed early in neural differentiation in the neural plate, and expression continues in the neural tube after neural fold closure. Expressed in the presumptive midbrain territory. Also expressed in the prospective neural crest and the preplacodal field, anterior to the neural plate. Strongly expressed in the profundal placode and weakly expressed in the trigeminal placode. Also expressed in the mesoderm in the Spemann organizer from the start of gastrulation, and subsequently in its derivatives; namely in the notochord as well as in the somites of stage 25 embryos, and the somites and notochord of tailbud embryos. Also expressed in specific and overlapping dynamic patterns with irx2 and irx3 during pronephric kidney development. Renal expression begins in the dorsal region of the pronephric anlage at mid neurula stage and continues to at least tailbud stages where expression is confined to the intermediate tubule segment IT1. Renal expression is maintained at tadpole stages.

It is found in the nucleus. Acts partially redundantly with other irx members in neural patterning. Required for formation of the posterior forebrain, midbrain, hindbrain, and to a lesser extent, spinal cord. Acts early in neural plate development to induce expression of some but not all proneural genes, and specify a neural precursor state. Also up-regulates repressors that prevent neuronal differentiation. Patterns the neuroectoderm in both the anterior/posterior and dorsal/ventral axes. Acts primarily as a transcriptional repressor during neural development, and binds to the bmp4 promoter to repress gene expression and thus mediate down-regulation of bmp4 by wnt signaling. Controls multiple processes through bmp4-repression including neural plate development, neural crest specification and Spemann organizer development. Involved in the specification of the preplacodal field at the anterior border of the neural plate. Regulates the genetic cascade of interactions that are necessary for positioning the isthmus organizer and the formation of the midbrain-hindbrain boundary. Required during at least two stages of pronephros kidney development; during neurula stages, maintains transcription of key renal genes to define the size and identity of the pronephric anlage, probably in part through regulation of bmp-signaling. Subsequently required for proper formation of the intermediate tubule segment of the pronephros. Acts principally as a transcriptional activator during pronephros development. The polypeptide is Iroquois-class homeodomain protein irx-1-A (irx1-a) (Xenopus laevis (African clawed frog)).